Here is a 554-residue protein sequence, read N- to C-terminus: Potassium-transporting ATPase potassium-binding subunit (554 aa).

The next 10 helical transmembrane spans lie at 1–21, 60–80, 131–151, 174–194, 246–266, 279–299, 375–395, 412–432, 481–501, and 525–545; these read MSPV…LALA, PAYL…LYVL, GLAV…VALV, VRVL…CGAI, PGPF…FALT, GYAI…LMMW, GLYG…LMVG, FAAC…AAAM, IGIV…ALAG, and GLLV…ALAL.

Belongs to the KdpA family. The system is composed of three essential subunits: KdpA, KdpB and KdpC.

The protein resides in the cell membrane. Part of the high-affinity ATP-driven potassium transport (or Kdp) system, which catalyzes the hydrolysis of ATP coupled with the electrogenic transport of potassium into the cytoplasm. This subunit binds the extracellular potassium ions and delivers the ions to the membrane domain of KdpB through an intramembrane tunnel. This chain is Potassium-transporting ATPase potassium-binding subunit, found in Streptomyces avermitilis (strain ATCC 31267 / DSM 46492 / JCM 5070 / NBRC 14893 / NCIMB 12804 / NRRL 8165 / MA-4680).